The following is a 452-amino-acid chain: Transcription factor PERIANTHIA (452 aa).

Positions 164 to 227 constitute a bZIP domain; that stretch reads DQRTLRRLAQ…RGVSADHTHL (64 aa). The segment at 166–186 is basic motif; the sequence is RTLRRLAQNREAARKSRLRKK. The interval 192–206 is leucine-zipper; that stretch reads LENSRIRLAQLEEEL. A DOG1 domain is found at 233–449; it reads VFSFELEYTR…RALSSLWLAR (217 aa).

The protein belongs to the bZIP family. As to quaternary structure, interacts with GRXC7/ROXY1. Interacts with BOP1 and BOP2.

The protein localises to the nucleus. Functionally, transcriptional activator involved in the determination of floral organ number. Acts to determine floral organ patterning by establishing floral organ primordia in specific numbers and positions. Plays a role in regulating stem cell fate by directly controlling AG expression. Binds to the 5'-AAGAAT-3' cis-acting element found in AG promoter. Might represent a target for a post-translational modification by GRXC7/ROXY1. The chain is Transcription factor PERIANTHIA (PAN) from Arabidopsis thaliana (Mouse-ear cress).